A 214-amino-acid polypeptide reads, in one-letter code: Endosomal/vacuolar adapter protein YPT35 (214 aa).

Positions 1–63 are disordered; that stretch reads MNDKISFLPP…ATITRTRPRR (63 aa). The short motif at 5–15 is the PxP element; the sequence is ISFLPPEPIQL. Positions 16-31 are enriched in acidic residues; the sequence is LDEDSTEPELDIDSQQ. The span at 38–58 shows a compositional bias: low complexity; the sequence is SASNSNDSTSHSNDCGATITR. Phosphoserine occurs at positions 65 and 66. The PX domain occupies 73 to 213; that stretch reads FQKAHVSDCT…IQFLEPSKRV (141 aa).

This sequence belongs to the YPT35 family. Interacts with RBD2, YIF1, YIP1 and YIP4.

The protein resides in the endosome membrane. It localises to the vacuole membrane. Its function is as follows. Recruits the lipid transfer protein VPS13 to endosomal and vacuolar membranes. In Saccharomyces cerevisiae (strain YJM789) (Baker's yeast), this protein is Endosomal/vacuolar adapter protein YPT35 (YPT35).